A 319-amino-acid polypeptide reads, in one-letter code: Red chlorophyll catabolite reductase, chloroplastic (319 aa).

Residues 1–39 (MAMIFCNTLYSSSSPSYLSPLTSKPSRFSKNLRPRAQFQ) constitute a chloroplast transit peptide. Residues Glu-154 and 207 to 209 (YVS) each bind red chlorophyll catabolite. Positions 255-286 (LERCVKEEEEKIVVGEEERMELERRDKSFRRK) form a coiled coil. Asp-291 provides a ligand contact to red chlorophyll catabolite.

In terms of assembly, homodimer. Interacts with HCAR. Interacts with SGR1, NYC1, NOL, PPH, PAO and the LHCII complex. Part of a SGR1-CCE-LHCII complex, which acts in chlorophyll breakdown. As to expression, expressed in all tissues tested, including roots.

Its subcellular location is the plastid. The protein resides in the chloroplast stroma. It is found in the chloroplast thylakoid membrane. The enzyme catalyses primary fluorescent chlorophyll catabolite + 2 oxidized [2Fe-2S]-[ferredoxin] = red chlorophyll catabolite + 2 reduced [2Fe-2S]-[ferredoxin] + 3 H(+). It participates in porphyrin-containing compound metabolism; chlorophyll degradation. Catalyzes the key reaction of chlorophyll catabolism, porphyrin macrocycle cleavage of pheophorbide a (pheide a) to a primary fluorescent catabolite (pFCC). Works in a two-step reaction with pheophorbide a oxygenase (PaO) by reducing the C20/C1 double bond of the intermediate, RCC. Belongs to the chlorophyll catabolic enzymes (CCEs). This chain is Red chlorophyll catabolite reductase, chloroplastic, found in Arabidopsis thaliana (Mouse-ear cress).